A 335-amino-acid polypeptide reads, in one-letter code: Probable BOI-related E3 ubiquitin-protein ligase 3 (335 aa).

The tract at residues 196 to 232 is WRD domain; it reads LEEKVKSLCVENQIWRDVAQSNEATVNALRSNLQQVL. The RING-type zinc-finger motif lies at 287-322; the sequence is CRSCGKGEASVLLLPCRHMCLCSVCGSSLNTCPICK.

Interacts with the DELLA proteins GAI, RGA, RGL1, RGL2 and RGL3.

It carries out the reaction S-ubiquitinyl-[E2 ubiquitin-conjugating enzyme]-L-cysteine + [acceptor protein]-L-lysine = [E2 ubiquitin-conjugating enzyme]-L-cysteine + N(6)-ubiquitinyl-[acceptor protein]-L-lysine.. Its pathway is protein degradation; proteasomal ubiquitin-dependent pathway. In terms of biological role, probable E3 ubiquitin-protein ligase. Has no effect on the stability of the DELLA proteins. The chain is Probable BOI-related E3 ubiquitin-protein ligase 3 (BRG3) from Arabidopsis thaliana (Mouse-ear cress).